A 223-amino-acid polypeptide reads, in one-letter code: MNTPMFTRTSSLERTLETNKVLKNTYFLLSMTLVTSAIAAMATMAIGISPIVALVMQLAAIGILFFVMPKAINSSSGLVWTFVFTGLMGGALGPMLNFYAAMPNGPIVIAQALGLTGMVFLGLSAYTITSKKDFSFMRNFLFAGLIIVIVAALINIFVGSTVAHLAISSVSALVFSGFILFDTSRIVRGEETNYISATISMYLNILNLFTSLLSILGIMNNND.

7 consecutive transmembrane segments (helical) span residues 25–45 (TYFLLSMTLVTSAIAAMATMA), 46–66 (IGISPIVALVMQLAAIGILFF), 78–98 (LVWTFVFTGLMGGALGPMLNF), 105–125 (GPIVIAQALGLTGMVFLGLSA), 140–160 (FLFAGLIIVIVAALINIFVGS), 161–181 (TVAHLAISSVSALVFSGFILF), and 199–219 (ISMYLNILNLFTSLLSILGIM).

It belongs to the BI1 family.

The protein localises to the cell membrane. This is an uncharacterized protein from Vibrio cholerae serotype O1 (strain ATCC 39315 / El Tor Inaba N16961).